Consider the following 260-residue polypeptide: Oxidoreductase macE (260 aa).

The protein belongs to the oxidoreductase OpS7 family.

It functions in the pathway secondary metabolite biosynthesis; terpenoid biosynthesis. In terms of biological role, oxidoreductase; part of the gene cluster that mediates the biosynthesis of macrophorins, isoprenoid epoxycyclohexenones containing cyclized drimane moieties. The first step of the pathway is the synthesis of 6-methylsalicylic acid (6-MSA) by the polyketide synthase macA. 6-MSA is then converted to m-cresol by the decarboxylase macB. The cytochrome P450 monooxygenase macC then catalyzes the oxidation of m-cresol to toluquinol. Epoxidation of toluquinol is then performed by the short chain dehydrogenase macD, with the help of macE, and a further prenylation by macG leads to 7-deacetoxyyanuthone A. The next step is the hydroxylation of C-22 of 7-deacetoxyyanuthone A by the cytochrome P450 monooxygenase macH to yield 22-deacetylyanuthone A. O-Mevalon transferase macI then attaches mevalon to the hydroxyl group of 22-deacetylyanuthone A to produce yanuthone E. The terpene cyclase macJ catalyzes the cyclization of 22-deacetylyanuthone A to macrophorin A. MacJ is also able to catalyze cyclization of yanuthone E and 7-deacetoxyyanuthone A to their corresponding macrophorins. The macJ products can be further modified by macH and macJ, as well as by the FAD-dependent monooxygenase macF, to produce additional macrophorins, including 4'-oxomacrophorin A, 4'-oxomacrophorin D and 4'-oxomacrophorin E. The polypeptide is Oxidoreductase macE (Penicillium terrestre).